Here is a 165-residue protein sequence, read N- to C-terminus: Bacterial non-heme ferritin (165 aa).

A Ferritin-like diiron domain is found at Met1–Gly145. Positions 17, 49, 50, 53, 94, 126, 127, and 130 each coordinate Fe cation.

It belongs to the ferritin family. Prokaryotic subfamily. As to quaternary structure, homooligomer of 24 subunits that assemble into a spherical protein shell (12 +/- 1 nM diameter) that can sequester at least 2000 iron atoms.

Its subcellular location is the cytoplasm. It catalyses the reaction 4 Fe(2+) + O2 + 6 H2O = 4 iron(III) oxide-hydroxide + 12 H(+). Iron-storage protein. This Escherichia coli O157:H7 protein is Bacterial non-heme ferritin (ftnA).